Reading from the N-terminus, the 203-residue chain is Dephospho-CoA kinase (203 aa).

The DPCK domain maps to 10–203 (IIGITGNIGS…LTGGAKGGRG (194 aa)). 18-23 (GSGKST) serves as a coordination point for ATP.

This sequence belongs to the CoaE family.

Its subcellular location is the cytoplasm. It catalyses the reaction 3'-dephospho-CoA + ATP = ADP + CoA + H(+). Its pathway is cofactor biosynthesis; coenzyme A biosynthesis; CoA from (R)-pantothenate: step 5/5. Its function is as follows. Catalyzes the phosphorylation of the 3'-hydroxyl group of dephosphocoenzyme A to form coenzyme A. In Thermus thermophilus (strain ATCC BAA-163 / DSM 7039 / HB27), this protein is Dephospho-CoA kinase.